The primary structure comprises 498 residues: Trehalose-6-phosphate synthase (498 aa).

Arginine 28 contacts D-glucose 6-phosphate. Glycine 48–glycine 49 provides a ligand contact to UDP-alpha-D-glucose. Positions 106 and 160 each coordinate D-glucose 6-phosphate. Residues arginine 302 and lysine 307 each contribute to the UDP-alpha-D-glucose site. Residue arginine 340 participates in D-glucose 6-phosphate binding. UDP-alpha-D-glucose is bound at residue leucine 405–glutamate 409.

It belongs to the glycosyltransferase 20 family. As to quaternary structure, homotetramer.

It catalyses the reaction ADP-alpha-D-glucose + D-glucose 6-phosphate = alpha,alpha-trehalose 6-phosphate + ADP + H(+). The catalysed reaction is CDP-alpha-D-glucose + D-glucose 6-phosphate = alpha,alpha-trehalose 6-phosphate + CDP + H(+). It carries out the reaction GDP-alpha-D-glucose + D-glucose 6-phosphate = alpha,alpha-trehalose 6-phosphate + GDP + H(+). The enzyme catalyses TDP-alpha-D-glucose + D-glucose 6-phosphate = 5-methyl-UDP + alpha,alpha-trehalose 6-phosphate + H(+). It catalyses the reaction D-glucose 6-phosphate + UDP-alpha-D-glucose = alpha,alpha-trehalose 6-phosphate + UDP + H(+). It functions in the pathway glycan biosynthesis; trehalose biosynthesis. Probably involved in the osmoprotection via the biosynthesis of trehalose and in the production of glycogen and alpha-glucan via the TreS-Pep2 branch involved in the biosynthesis of maltose-1-phosphate (M1P). Catalyzes the transfer of glucose from UDP-glucose (UDP-Glc) to D-glucose 6-phosphate (Glc-6-P) to form trehalose-6-phosphate. Probably also able to use ADP-Glc, CDP-Glc, GDP-Glc and TDP-Glc as glucosyl donors. The polypeptide is Trehalose-6-phosphate synthase (Mycobacterium leprae (strain TN)).